We begin with the raw amino-acid sequence, 371 residues long: Flagellar P-ring protein 1 (371 aa).

Positions Met-1–Ala-19 are cleaved as a signal peptide.

Belongs to the FlgI family. In terms of assembly, the basal body constitutes a major portion of the flagellar organelle and consists of four rings (L,P,S, and M) mounted on a central rod.

The protein resides in the periplasm. The protein localises to the bacterial flagellum basal body. In terms of biological role, assembles around the rod to form the L-ring and probably protects the motor/basal body from shearing forces during rotation. The sequence is that of Flagellar P-ring protein 1 from Cereibacter sphaeroides (strain ATCC 17023 / DSM 158 / JCM 6121 / CCUG 31486 / LMG 2827 / NBRC 12203 / NCIMB 8253 / ATH 2.4.1.) (Rhodobacter sphaeroides).